Consider the following 200-residue polypeptide: Large ribosomal subunit protein uL4 (200 aa).

Positions 38 to 72 are disordered; sequence GRQGSKQQKTRSDVSGGGKRPWRQKGTGRARAGTI.

The protein belongs to the universal ribosomal protein uL4 family. Part of the 50S ribosomal subunit.

One of the primary rRNA binding proteins, this protein initially binds near the 5'-end of the 23S rRNA. It is important during the early stages of 50S assembly. It makes multiple contacts with different domains of the 23S rRNA in the assembled 50S subunit and ribosome. Functionally, forms part of the polypeptide exit tunnel. The sequence is that of Large ribosomal subunit protein uL4 from Pseudomonas fluorescens (strain ATCC BAA-477 / NRRL B-23932 / Pf-5).